A 921-amino-acid chain; its full sequence is TRPM8 channel-associated factor 1 (921 aa).

The region spanning 542-841 is the Peptidase M60 domain; the sequence is YCWMSTGLYI…TYLQLQEAFG (300 aa).

It belongs to the TCAF family. Interacts with TRPM8 (via N-terminus and C-terminus domains); the interaction inhibits TRPM8 channel activity. Interacts with TRPV6.

The protein resides in the cell membrane. Its function is as follows. Positively regulates the plasma membrane cation channel TRPM8 activity. Involved in the recruitment of TRPM8 to the cell surface. Promotes prostate cancer cell migration inhibition in a TRPM8-dependent manner. This chain is TRPM8 channel-associated factor 1, found in Pongo abelii (Sumatran orangutan).